Here is a 439-residue protein sequence, read N- to C-terminus: Histone acetyltransferase GCN5 (439 aa).

Basic and acidic residues-rich tracts occupy residues 1 to 28 (MVTK…KLEN) and 39 to 59 (ETNK…KETE). The interval 1-59 (MVTKHQIEEDHLDGATTDPEVKRVKLENNVEEIQPEQAETNKQEGTDKENKGKFEKETE) is disordered. Positions 100 to 255 (IEFRVVNNDN…GGTLMQCSML (156 aa)) constitute an N-acetyltransferase domain. The Proton donor/acceptor role is filled by E173. Residues 177–179 (CAI), 184–190 (QVRGYGA), and 216–219 (YAIG) contribute to the acetyl-CoA site. Residues 327–431 (PKRGPHDAAI…KFFNNKVKEI (105 aa)) form the Bromo domain.

Belongs to the acetyltransferase family. GCN5 subfamily. As to quaternary structure, component of the 1.8 MDa SAGA (Spt-Ada-Gcn5 acetyltransferase) complex, which is composed of 19 subunits TRA1, SPT7, TAF5, NGG1/ADA3, SGF73, SPT20/ADA5, SPT8, TAF12, TAF6, HFI1/ADA1, UBP8, GCN5, ADA2, SPT3, SGF29, TAF10, TAF9, SGF11 and SUS1. The SAGA complex is composed of 4 modules, namely the HAT (histone acetyltransferase) module (GCN5, ADA2, NGG1/ADA3 and SGF29), the DUB (deubiquitinating) module (UBP8, SGF11, SGF73 and SUS1), the core or TAF (TBP-associated factor) module (TAF5, TAF6, TAF9, TAF10 and TAF12), and the Tra1 or SPT (Suppressor of Ty) module (TRA1, HFI1/ADA1, SPT3, SPT7, SPT8 and SPT20/ADA5). The Tra1/SPT module binds activators, the core module recruits TBP (TATA-binding protein), the HAT module contains the histone H3 acetyltransferase GCN5, and the DUB module comprises the histone H2B deubiquitinase UBP8. Also identified in an altered form of SAGA, named SALSA (SAGA altered, Spt8 absent) or SLIK (SAGA-like) complex, which contains a C-terminal truncated form of SPT7 and is missing SPT8. However, it has been shown that the SAGA and SAGA-like SALSA/SLIK transcriptional coactivators are structurally and biochemically equivalent. Component of the 0.8 MDa ADA complex, a HAT complex distinct from SAGA, which at least consists of ADA2, NGG1/ADA3, AHC1, AHC2, SGF29 and GCN5. Component of an ADA/GCN5 complex that consists of HFI1/ADA1, ADA2, NGG1/ADA3, SPT20/ADA5 and GCN5 and probably is a subcomplex of SAGA.

It localises to the nucleus. The protein localises to the cytoplasm. The catalysed reaction is L-lysyl-[protein] + acetyl-CoA = N(6)-acetyl-L-lysyl-[protein] + CoA + H(+). It carries out the reaction (2E)-butenoyl-CoA + L-lysyl-[protein] = N(6)-(2E)-butenoyl-L-lysyl-[protein] + CoA + H(+). Its function is as follows. Histone acetyltransferase that acetylates histone H2B to form H2BK11ac and H2BK16ac, histone H3 to form H3K9ac, H3K14ac, H3K18ac, H3K23ac, H3K27ac and H3K36ac, with a lower preference histone H4 to form H4K8ac and H4K16ac, and contributes to H2A.Z acetylation. Acetylation of histones gives a specific tag for epigenetic transcription activation and elongation. Operates in concert with certain DNA-binding transcriptional activators such as GCN4 or HAP2/3/4. Its acetyltransferase activity seems to be dependent on the association in different multisubunit complexes. Component of the transcription coactivator SAGA complex. SAGA acts as a general cofactor required for essentially all RNA polymerase II transcription. At the promoters, SAGA is required for transcription pre-initiation complex (PIC) recruitment. It influences RNA polymerase II transcriptional activity through different activities such as TBP interaction (via core/TAF module) and promoter selectivity, interaction with transcription activators (via Tra1/SPT module), and chromatin modification through histone acetylation (via HAT module) and deubiquitination (via DUB module). SAGA preferentially acetylates histones H3 (to form H3K9ac, H3K14ac, H3K18ac and H3K23ac) and H2B and deubiquitinates histone H2B. SAGA interacts with DNA via upstream activating sequences (UASs). Also identified in a modified version of SAGA named SALSA or SLIK. The cleavage of SPT7 and the absence of the SPT8 subunit in SLIK neither drive any major conformational differences in its structure compared with SAGA, nor significantly affect HAT, DUB, or DNA-binding activities. Component of the ADA histone acetyltransferase complex, which preferentially acetylates nucleosomal histones H3 (to form H3K14ac and H3K18ac) and H2B. In addition to histone acetyltransferase, can use different acyl-CoA substrates, such as (2E)-butenoyl-CoA (crotonyl-CoA) and is able to mediate histone crotonylation. Controls the metaphase-to-anaphase transition and is required for correct chromosome segregation and centromere/kinetochore function in mitosis. May be involved in response to DNA damage by genotoxic agents. This Saccharomyces cerevisiae (strain ATCC 204508 / S288c) (Baker's yeast) protein is Histone acetyltransferase GCN5.